The chain runs to 947 residues: Valine--tRNA ligase (947 aa).

The 'HIGH' region motif lies at 45-55; that stretch reads PNVTGSLHMGH. Residues 591-595 carry the 'KMSKS' region motif; it reads KMSKS. Lys594 contacts ATP. Residues 879–943 are a coiled coil; the sequence is DLAAEQARLE…ASLRTALTRV (65 aa).

This sequence belongs to the class-I aminoacyl-tRNA synthetase family. ValS type 1 subfamily. As to quaternary structure, monomer.

Its subcellular location is the cytoplasm. It catalyses the reaction tRNA(Val) + L-valine + ATP = L-valyl-tRNA(Val) + AMP + diphosphate. Its function is as follows. Catalyzes the attachment of valine to tRNA(Val). As ValRS can inadvertently accommodate and process structurally similar amino acids such as threonine, to avoid such errors, it has a 'posttransfer' editing activity that hydrolyzes mischarged Thr-tRNA(Val) in a tRNA-dependent manner. The protein is Valine--tRNA ligase of Agrobacterium fabrum (strain C58 / ATCC 33970) (Agrobacterium tumefaciens (strain C58)).